The sequence spans 242 residues: UPF0246 protein SP70585_1589 (242 aa).

The protein belongs to the UPF0246 family.

The polypeptide is UPF0246 protein SP70585_1589 (Streptococcus pneumoniae (strain 70585)).